Reading from the N-terminus, the 265-residue chain is Hydroxyethylthiazole kinase (265 aa).

Methionine 50 contributes to the substrate binding site. Arginine 125 and threonine 171 together coordinate ATP. Glycine 198 provides a ligand contact to substrate.

This sequence belongs to the Thz kinase family. Mg(2+) is required as a cofactor.

It carries out the reaction 5-(2-hydroxyethyl)-4-methylthiazole + ATP = 4-methyl-5-(2-phosphooxyethyl)-thiazole + ADP + H(+). Its pathway is cofactor biosynthesis; thiamine diphosphate biosynthesis; 4-methyl-5-(2-phosphoethyl)-thiazole from 5-(2-hydroxyethyl)-4-methylthiazole: step 1/1. Its function is as follows. Catalyzes the phosphorylation of the hydroxyl group of 4-methyl-5-beta-hydroxyethylthiazole (THZ). In Salmonella choleraesuis (strain SC-B67), this protein is Hydroxyethylthiazole kinase.